The chain runs to 201 residues: Sterile alpha motif domain-containing protein 12 (201 aa).

Residues 77 to 143 enclose the SAM domain; it reads WTQQDVCKWL…LQQVLQLKVR (67 aa).

The chain is Sterile alpha motif domain-containing protein 12 (SAMD12) from Pongo abelii (Sumatran orangutan).